The chain runs to 408 residues: LL-diaminopimelate aminotransferase (408 aa).

Substrate-binding residues include Tyr-15 and Gly-42. Residues Tyr-72, 108–109 (SK), Tyr-132, Asn-187, Tyr-218, and 246–248 (SFS) contribute to the pyridoxal 5'-phosphate site. Substrate contacts are provided by Lys-109, Tyr-132, and Asn-187. N6-(pyridoxal phosphate)lysine is present on Lys-249. Residues Arg-257 and Asn-292 each contribute to the pyridoxal 5'-phosphate site. 2 residues coordinate substrate: Asn-292 and Arg-388.

The protein belongs to the class-I pyridoxal-phosphate-dependent aminotransferase family. LL-diaminopimelate aminotransferase subfamily. Homodimer. The cofactor is pyridoxal 5'-phosphate.

The enzyme catalyses (2S,6S)-2,6-diaminopimelate + 2-oxoglutarate = (S)-2,3,4,5-tetrahydrodipicolinate + L-glutamate + H2O + H(+). Its pathway is amino-acid biosynthesis; L-lysine biosynthesis via DAP pathway; LL-2,6-diaminopimelate from (S)-tetrahydrodipicolinate (aminotransferase route): step 1/1. Functionally, involved in the synthesis of meso-diaminopimelate (m-DAP or DL-DAP), required for both lysine and peptidoglycan biosynthesis. Catalyzes the direct conversion of tetrahydrodipicolinate to LL-diaminopimelate. In Prochlorococcus marinus subsp. pastoris (strain CCMP1986 / NIES-2087 / MED4), this protein is LL-diaminopimelate aminotransferase.